A 131-amino-acid chain; its full sequence is Small ribosomal subunit protein eS8 (131 aa).

The interval 1 to 37 (MKLGAFYKGGDLKKPSGGKKRRVRRTKKKALGGGPPQ) is disordered. Residues 16-30 (SGGKKRRVRRTKKKA) show a composition bias toward basic residues.

This sequence belongs to the eukaryotic ribosomal protein eS8 family. In terms of assembly, part of the 30S ribosomal subunit.

The sequence is that of Small ribosomal subunit protein eS8 from Pyrobaculum neutrophilum (strain DSM 2338 / JCM 9278 / NBRC 100436 / V24Sta) (Thermoproteus neutrophilus).